A 313-amino-acid polypeptide reads, in one-letter code: Homoserine O-succinyltransferase (313 aa).

Cysteine 142 acts as the Acyl-thioester intermediate in catalysis. Residues lysine 163 and serine 192 each contribute to the substrate site. The active-site Proton acceptor is the histidine 235. Glutamate 237 is a catalytic residue. Arginine 249 provides a ligand contact to substrate.

The protein belongs to the MetA family.

The protein resides in the cytoplasm. It carries out the reaction L-homoserine + succinyl-CoA = O-succinyl-L-homoserine + CoA. It functions in the pathway amino-acid biosynthesis; L-methionine biosynthesis via de novo pathway; O-succinyl-L-homoserine from L-homoserine: step 1/1. Functionally, transfers a succinyl group from succinyl-CoA to L-homoserine, forming succinyl-L-homoserine. The sequence is that of Homoserine O-succinyltransferase from Shewanella sp. (strain ANA-3).